Reading from the N-terminus, the 122-residue chain is UPF0482 protein Spro_2288 (122 aa).

Residues 1–31 form the signal peptide; it reads MKTLSTQRLLRGMLPVAMLMLMGAWQAPALA. The disordered stretch occupies residues 46–71; sequence SNSGAMSTEAARQSKQQFNDTKSLRN.

Belongs to the UPF0482 family.

This Serratia proteamaculans (strain 568) protein is UPF0482 protein Spro_2288.